The primary structure comprises 461 residues: Cysteine--tRNA ligase (461 aa).

Cys28 serves as a coordination point for Zn(2+). The 'HIGH' region motif lies at Ile30 to His40. Zn(2+) contacts are provided by Cys209, His234, and Glu238. The 'KMSKS' region signature appears at Lys266–Ser270. Lys269 contacts ATP.

Belongs to the class-I aminoacyl-tRNA synthetase family. In terms of assembly, monomer. Requires Zn(2+) as cofactor.

It is found in the cytoplasm. The catalysed reaction is tRNA(Cys) + L-cysteine + ATP = L-cysteinyl-tRNA(Cys) + AMP + diphosphate. The sequence is that of Cysteine--tRNA ligase from Escherichia coli O6:K15:H31 (strain 536 / UPEC).